The primary structure comprises 176 residues: RNA pyrophosphohydrolase (176 aa).

Residues Gly6–Lys149 enclose the Nudix hydrolase domain. The short motif at Gly38–Gly59 is the Nudix box element.

This sequence belongs to the Nudix hydrolase family. RppH subfamily. Requires a divalent metal cation as cofactor.

Functionally, accelerates the degradation of transcripts by removing pyrophosphate from the 5'-end of triphosphorylated RNA, leading to a more labile monophosphorylated state that can stimulate subsequent ribonuclease cleavage. The chain is RNA pyrophosphohydrolase from Proteus mirabilis (strain HI4320).